Consider the following 165-residue polypeptide: Chorismate pyruvate-lyase (165 aa).

The substrate site is built by M35, R77, L115, and E156.

This sequence belongs to the UbiC family. As to quaternary structure, monomer.

Its subcellular location is the cytoplasm. The enzyme catalyses chorismate = 4-hydroxybenzoate + pyruvate. It functions in the pathway cofactor biosynthesis; ubiquinone biosynthesis. In terms of biological role, removes the pyruvyl group from chorismate, with concomitant aromatization of the ring, to provide 4-hydroxybenzoate (4HB) for the ubiquinone pathway. This is Chorismate pyruvate-lyase from Citrobacter koseri (strain ATCC BAA-895 / CDC 4225-83 / SGSC4696).